The chain runs to 187 residues: Putative acyl-coenzyme A oxidase At3g06690 (187 aa).

Positions Met-1 to Pro-21 are disordered.

The protein belongs to the acyl-CoA oxidase family.

The enzyme catalyses a 2,3-saturated acyl-CoA + O2 = a (2E)-enoyl-CoA + H2O2. The chain is Putative acyl-coenzyme A oxidase At3g06690 from Arabidopsis thaliana (Mouse-ear cress).